Consider the following 258-residue polypeptide: Imidazole glycerol phosphate synthase subunit HisF (258 aa).

Active-site residues include aspartate 11 and aspartate 130.

It belongs to the HisA/HisF family. As to quaternary structure, heterodimer of HisH and HisF.

Its subcellular location is the cytoplasm. The enzyme catalyses 5-[(5-phospho-1-deoxy-D-ribulos-1-ylimino)methylamino]-1-(5-phospho-beta-D-ribosyl)imidazole-4-carboxamide + L-glutamine = D-erythro-1-(imidazol-4-yl)glycerol 3-phosphate + 5-amino-1-(5-phospho-beta-D-ribosyl)imidazole-4-carboxamide + L-glutamate + H(+). It functions in the pathway amino-acid biosynthesis; L-histidine biosynthesis; L-histidine from 5-phospho-alpha-D-ribose 1-diphosphate: step 5/9. Its function is as follows. IGPS catalyzes the conversion of PRFAR and glutamine to IGP, AICAR and glutamate. The HisF subunit catalyzes the cyclization activity that produces IGP and AICAR from PRFAR using the ammonia provided by the HisH subunit. The chain is Imidazole glycerol phosphate synthase subunit HisF from Pectobacterium carotovorum subsp. carotovorum (strain PC1).